The chain runs to 91 residues: Transcription factor ILI7 (91 aa).

Residues 4–58 (RSRSRASSAARITDEQIGDLVSKLQALLPEARLRSNDRVPSARVLQETCSYIRSL) enclose the bHLH domain.

The protein belongs to the bHLH protein family.

Functionally, atypical and probable non DNA-binding bHLH transcription factor that integrates multiple signaling pathways to regulate cell elongation and plant development. The chain is Transcription factor ILI7 (ILI7) from Oryza sativa subsp. indica (Rice).